Reading from the N-terminus, the 378-residue chain is Ribosomal RNA large subunit methyltransferase G (378 aa).

This sequence belongs to the methyltransferase superfamily. RlmG family.

Its subcellular location is the cytoplasm. It carries out the reaction guanosine(1835) in 23S rRNA + S-adenosyl-L-methionine = N(2)-methylguanosine(1835) in 23S rRNA + S-adenosyl-L-homocysteine + H(+). Specifically methylates the guanine in position 1835 (m2G1835) of 23S rRNA. The sequence is that of Ribosomal RNA large subunit methyltransferase G from Shewanella baltica (strain OS185).